The following is a 79-amino-acid chain: Endothelin-2 (79 aa).

A disordered region spans residues 1–23 (PEQTAPYGLGNPPRRRRRSLPRR). The segment at 24 to 39 (CQCSSARDPSCATFCL) is endothelin-like. Residues 51-79 (SRKSPADVFQTGKTGATRGELLQRLRDIS) form a disordered region.

This sequence belongs to the endothelin/sarafotoxin family.

It localises to the secreted. Functionally, endothelins are endothelium-derived vasoconstrictor peptides. This Macaca fascicularis (Crab-eating macaque) protein is Endothelin-2 (EDN2).